A 508-amino-acid polypeptide reads, in one-letter code: Tyrosine decarboxylase 4 (508 aa).

Residue K318 is modified to N6-(pyridoxal phosphate)lysine.

The protein belongs to the group II decarboxylase family. In terms of assembly, homodimer. Pyridoxal 5'-phosphate serves as cofactor.

The catalysed reaction is L-tyrosine + H(+) = tyramine + CO2. In Petroselinum crispum (Parsley), this protein is Tyrosine decarboxylase 4 (TYRDC-4).